Reading from the N-terminus, the 31-residue chain is Cyclotide psybry A (31 aa).

The cyclopeptide (Gly-Asn) cross-link spans Gly1–Asn31. 3 disulfides stabilise this stretch: Cys5/Cys20, Cys9/Cys22, and Cys15/Cys28.

In terms of processing, this is a cyclic peptide.

Its function is as follows. Probably participates in a plant defense mechanism. This is Cyclotide psybry A from Psychotria brachyceras.